The chain runs to 40 residues: Potassium channel toxin alpha-KTx 12.3 (40 aa).

4 cysteine pairs are disulfide-bonded: cysteine 2-cysteine 5, cysteine 10-cysteine 31, cysteine 16-cysteine 36, and cysteine 20-cysteine 38.

As to expression, expressed by the venom gland.

Its subcellular location is the secreted. Functionally, inhibits high conductance calcium-activated potassium channels (KCNMA). Inhibits Shaker B potassium channels. This Tityus costatus (Brazilian scorpion) protein is Potassium channel toxin alpha-KTx 12.3.